Here is a 3165-residue protein sequence, read N- to C-terminus: ORFB polyprotein (3165 aa).

One can recognise a Peptidase C8 domain in the interval 271 to 418; the sequence is MARSIGLSHE…LENEPDILVG (148 aa). Active-site for papain-like protease p48 activity residues include C341 and H388. Positions 453-472 are disordered; that stretch reads AEPGQRAKDNTNPSTPRPIE. Transmembrane regions (helical) follow at residues 791–811, 823–843, 1166–1186, 1193–1213, 1215–1235, and 1356–1376; these read IMIASSVAFLVPLYFTLYVPY, YILLPPVLWLVWTNLCYGYAC, AGLFWWYGCLHLLPFMAAAIM, KYLVGMAWLTEPGLLMLKALW, FPIFMVTPRWMLPFIVTVSVY, and ALGFVFAYMVSWAVYLVLRPP. Positions 1793–2208 are RNA-directed RNA polymerase; sequence FYKSRKALKQ…AEDSADYRAW (416 aa). The next 3 membrane-spanning stretches (helical) occupy residues 2495 to 2515, 2517 to 2537, and 2590 to 2610; these read VRIYQGMTVIISAMYFAMHWV, LFIQSLFLIGPLYNLFMWSFW, and LGIVPVTLVLDGLAEIIEVLF. A Helicase ATP-binding domain is found at 2651–2796; sequence ATKAIEHGHV…IPFLEPTLPK (146 aa). 2664–2671 contributes to the ATP binding site; that stretch reads AKTASGKS. The short motif at 2751 to 2754 is the DEFH box element; it reads DEFH.

In the C-terminal section; belongs to the DEAD box helicase family. Post-translationally, papain-like protease p48 is autocatalytically processed. The putative RNA-directed RNA polymerase/helicase may be further processed.

It localises to the host membrane. The enzyme catalyses RNA(n) + a ribonucleoside 5'-triphosphate = RNA(n+1) + diphosphate. The catalysed reaction is ATP + H2O = ADP + phosphate + H(+). Functionally, papain-like protease p48 is a cysteine protease of the peptidase family C8. This Cryphonectria hypovirus 1 (strain EP713) (CHV-1/EP713) protein is ORFB polyprotein.